The sequence spans 146 residues: Large ribosomal subunit protein uL13 (146 aa).

The protein belongs to the universal ribosomal protein uL13 family. Part of the 50S ribosomal subunit.

In terms of biological role, this protein is one of the early assembly proteins of the 50S ribosomal subunit, although it is not seen to bind rRNA by itself. It is important during the early stages of 50S assembly. This Spiroplasma citri protein is Large ribosomal subunit protein uL13.